The following is a 500-amino-acid chain: Allene oxide synthase 3 (500 aa).

Residues 1–26 (MAPPPVNSGDAAAAATGEKSKLSPSG) are disordered. Substrate contacts are provided by residues 297-298 (FN), lysine 304, and 365-368 (PVEF). Cysteine 452 contacts heme.

This sequence belongs to the cytochrome P450 family. It depends on heme as a cofactor. In terms of tissue distribution, not expressed in dark-grown seedlings.

It carries out the reaction (13S)-hydroperoxy-(9Z,11E,15Z)-octadecatrienoate = (9Z,13S,15Z)-12,13-epoxyoctadeca-9,11,15-trienoate + H2O. It participates in lipid metabolism; oxylipin biosynthesis. Involved in the biosynthesis of jasmonic acid, a growth regulator that is implicated also as a signaling molecule in plant defense. Converts 13-hydroperoxylinolenic acid to 12,13-epoxylinolenic acid. This is Allene oxide synthase 3 (CYP74A3) from Oryza sativa subsp. japonica (Rice).